Here is a 381-residue protein sequence, read N- to C-terminus: Deoxyguanosinetriphosphate triphosphohydrolase-like protein (381 aa).

Positions 76 to 203 constitute an HD domain; the sequence is RMTHTLEVAG…ADLSDEIAYT (128 aa).

Belongs to the dGTPase family. Type 2 subfamily.

This chain is Deoxyguanosinetriphosphate triphosphohydrolase-like protein, found in Leptospira interrogans serogroup Icterohaemorrhagiae serovar copenhageni (strain Fiocruz L1-130).